The sequence spans 265 residues: MNLTAYRDLSPAALRERIRQGEFDGPTAGLANGYAQANLMIVRRELAYDFLLFCQRNPKPCPLLDVTDPGSFEPRHAAPGADIRTDFPRYRIYRNGELDQEVQDITPFWEDDMVAFLIGCSFSFEAALLANGVPVRHIEDGHNVPMYRTNIACQPAGGLSGPMVVSMRPMPANKVVRAVQVTSRFPSVHGAPVHVGDPRLLGIADLAKPDFGEPSELREGEVPVFWACGVTPQAVAMQARPELVITHAPGHMFITDLRDEQLGVI.

It belongs to the D-glutamate cyclase family.

This is Putative hydro-lyase PST_2764 from Stutzerimonas stutzeri (strain A1501) (Pseudomonas stutzeri).